We begin with the raw amino-acid sequence, 330 residues long: Thioredoxin domain-containing protein 6 (330 aa).

Positions 11-115 constitute a Thioredoxin domain; the sequence is QVNISTQELW…QKTILDQLEA (105 aa). The interval 157–303 is NDK; sequence ERTCTLAIIK…LFPSLKFSDK (147 aa). The interval 300–330 is disordered; it reads FSDKDTEAPQGGEAEATAGPTEALCFPEDVD. Over residues 307–322 the composition is skewed to low complexity; sequence APQGGEAEATAGPTEA.

It belongs to the NDK family. Monomer and homodimer. Detected at very low levels in testis, lung and brain.

Its subcellular location is the cytoplasm. The protein localises to the cytoskeleton. It localises to the cilium axoneme. The protein resides in the dynein axonemal particle. Functionally, may be a regulator of microtubule physiology. This Homo sapiens (Human) protein is Thioredoxin domain-containing protein 6.